The following is a 207-amino-acid chain: Thymidylate kinase (207 aa).

The tract at residues 11 to 49 is disordered; it reads EGIDGSGKSTQARRLAEHLRDTGRDPLLTREPGGSPGAE. 12–19 serves as a coordination point for ATP; sequence GIDGSGKS. Over residues 24–38 the composition is skewed to basic and acidic residues; that stretch reads RLAEHLRDTGRDPLL.

The protein belongs to the thymidylate kinase family.

It catalyses the reaction dTMP + ATP = dTDP + ADP. Functionally, phosphorylation of dTMP to form dTDP in both de novo and salvage pathways of dTTP synthesis. The polypeptide is Thymidylate kinase (Dinoroseobacter shibae (strain DSM 16493 / NCIMB 14021 / DFL 12)).